Here is a 447-residue protein sequence, read N- to C-terminus: Multicopper oxidase mco (447 aa).

Over residues 1–25 (MMDMKENDQKRNDMMDMKSHDERKN) the composition is skewed to basic and acidic residues. The disordered stretch occupies residues 1–43 (MMDMKENDQKRNDMMDMKSHDERKNLNSSQGKNEITFPKVLDP). Cu cation is bound by residues His-107, His-109, His-147, His-149, His-375, His-378, His-380, His-428, Cys-429, His-430, His-434, and Met-439.

Belongs to the multicopper oxidase family. Cu cation is required as a cofactor.

It is found in the cytoplasm. Its function is as follows. May be involved in copper homeostasis and oxidative stress response. Oxidizes the substrate 3,3'-dimethoxybenzidine in vitro. Also possesses low levels of phenoloxidase and ferroxidase activities. The protein is Multicopper oxidase mco (mco) of Staphylococcus aureus.